The following is a 152-amino-acid chain: Small ribosomal subunit protein uS15 (152 aa).

Over residues 1–10 the composition is skewed to basic residues; sequence MAKMHTRTKG. The tract at residues 1 to 26 is disordered; it reads MAKMHTRTKGKSGSTKPIRSESPAWS. Polar residues predominate over residues 11–26; the sequence is KSGSTKPIRSESPAWS.

This sequence belongs to the universal ribosomal protein uS15 family. Part of the 30S ribosomal subunit.

The sequence is that of Small ribosomal subunit protein uS15 from Methanococcoides burtonii (strain DSM 6242 / NBRC 107633 / OCM 468 / ACE-M).